Reading from the N-terminus, the 424-residue chain is CinA-like protein (424 aa).

The protein belongs to the CinA family.

The sequence is that of CinA-like protein from Shewanella baltica (strain OS155 / ATCC BAA-1091).